We begin with the raw amino-acid sequence, 438 residues long: Serine hydroxymethyltransferase (438 aa).

(6S)-5,6,7,8-tetrahydrofolate-binding positions include Leu-119 and 123 to 125 (GHL). Lys-228 is modified (N6-(pyridoxal phosphate)lysine). 370–372 (SPF) contributes to the (6S)-5,6,7,8-tetrahydrofolate binding site.

Belongs to the SHMT family. In terms of assembly, homodimer. Pyridoxal 5'-phosphate is required as a cofactor.

It localises to the cytoplasm. The catalysed reaction is (6R)-5,10-methylene-5,6,7,8-tetrahydrofolate + glycine + H2O = (6S)-5,6,7,8-tetrahydrofolate + L-serine. The protein operates within one-carbon metabolism; tetrahydrofolate interconversion. Its pathway is amino-acid biosynthesis; glycine biosynthesis; glycine from L-serine: step 1/1. Its function is as follows. Catalyzes the reversible interconversion of serine and glycine with tetrahydrofolate (THF) serving as the one-carbon carrier. This reaction serves as the major source of one-carbon groups required for the biosynthesis of purines, thymidylate, methionine, and other important biomolecules. Also exhibits THF-independent aldolase activity toward beta-hydroxyamino acids, producing glycine and aldehydes, via a retro-aldol mechanism. In Chlorobium chlorochromatii (strain CaD3), this protein is Serine hydroxymethyltransferase.